The following is a 361-amino-acid chain: MSLSRLIINNFRNLTAVDLELNHGFNFFIGANGSGKTSLLEAIFYLGHGKSFKSHISNRIIKYNQEEFTLFGKIQEEKHECSVGLQKNRQGETILRINGESNKKIADLAYLLPMQVITPEGLTLLNGGPIYRRAFLDWGLFHQNTDFYHNWNSLKRLLKQRNAALVQTRHYNELKPWDVELSKFAQIVSQSRAVYVESILTYIEKNCQFFLPELEITATFYQGWEKERDYADLLAQGFERDRSVGYTMVGPQKADFRFRANGLPVEDVLSRGQLKLLMCALRLAQGEYFIAQKNRQCIFLIDDFASELDTQKCELLADRLYQSGSQVFVTAITQEQLKPIQGKRQDNATSFFIKDGKMQFM.

30–37 (GANGSGKT) is a binding site for ATP.

This sequence belongs to the RecF family.

The protein localises to the cytoplasm. The RecF protein is involved in DNA metabolism; it is required for DNA replication and normal SOS inducibility. RecF binds preferentially to single-stranded, linear DNA. It also seems to bind ATP. The sequence is that of DNA replication and repair protein RecF from Glaesserella parasuis serovar 5 (strain SH0165) (Haemophilus parasuis).